Consider the following 934-residue polypeptide: Bifunctional uridylyltransferase/uridylyl-removing enzyme (934 aa).

The uridylyltransferase stretch occupies residues 1–379 (MSAHDLKLEE…TFSRRKRKLS (379 aa)). Residues 380 to 736 (DDGAFISENH…AKPHAFEAVT (357 aa)) form a uridylyl-removing region. One can recognise an HD domain in the interval 496-613 (VDEHLLRCIA…IDFADTVQTM (118 aa)). ACT domains follow at residues 737–818 (EITV…DMLA) and 848–931 (VIEV…RSPQ).

It belongs to the GlnD family. Mg(2+) serves as cofactor.

It catalyses the reaction [protein-PII]-L-tyrosine + UTP = [protein-PII]-uridylyl-L-tyrosine + diphosphate. It carries out the reaction [protein-PII]-uridylyl-L-tyrosine + H2O = [protein-PII]-L-tyrosine + UMP + H(+). Its activity is regulated as follows. Uridylyltransferase (UTase) activity is inhibited by glutamine, while glutamine activates uridylyl-removing (UR) activity. Its function is as follows. Modifies, by uridylylation and deuridylylation, the PII regulatory proteins (GlnB and homologs), in response to the nitrogen status of the cell that GlnD senses through the glutamine level. Under low glutamine levels, catalyzes the conversion of the PII proteins and UTP to PII-UMP and PPi, while under higher glutamine levels, GlnD hydrolyzes PII-UMP to PII and UMP (deuridylylation). Thus, controls uridylylation state and activity of the PII proteins, and plays an important role in the regulation of nitrogen assimilation and metabolism. The sequence is that of Bifunctional uridylyltransferase/uridylyl-removing enzyme from Brucella suis biovar 1 (strain 1330).